The following is a 162-amino-acid chain: MEIPVPVQPSWLRRASAPLPGFSAPGRLFDQRFGEGLLEAELASLCPAAIAPYYLRAPSVALPTAQVSTDSGYFSVLLDVKHFLPEEISVKVVDDHVEVHARHEERPDEHGFIAREFHRRYRLPPGVDPAAVTSALSPEGVLSIQATPASAQAQLPSPPAAK.

Positions methionine 1–glycine 72 are involved in stabilization of the HSPB1:HSBP6 heterodimer. Serine 16 carries the post-translational modification Phosphoserine. The region spanning arginine 56 to lysine 162 is the sHSP domain. Glutamine 66 carries the post-translational modification Deamidated glutamine. Serine 157 carries the post-translational modification Phosphoserine.

Belongs to the small heat shock protein (HSP20) family. In terms of assembly, homodimer. Small heat shock proteins form high molecular mass oligomers containing variable number of monomers; these oligomers display a very flexible quaternary structure easily exchanging their subunits. Heterooligomer with HSPB1; formed through oligomerization of HSPB1:HSBP6 dimers; subunit exchange leads to formation of at least two different heterooligomeric complexes, differing in variable quantities of HSPB1 and HSPB6 homodimers in addition to HSPB1:HSPB6 heterodimers. Heterooligomer with CRYAB; large heterooligomers consist of CRYAB homodimers and HSPB5:HSPB6 heterodimers but lacking HSPB6 homodimers. Interacts with BAG3. Interacts (phosphorylated) with YWHAZ. Interacts with PDE4A and PDE4D; required for maintenance of the non-phosphorylated state of HSPB6 under basal conditions. Interacts with KDR. Interacts with PRKD1. In terms of processing, phosphorylated at Ser-16 by PKA and probably PKD1K; required to protect cardiomyocytes from apoptosis.

It localises to the cytoplasm. The protein localises to the nucleus. The protein resides in the secreted. Functionally, small heat shock protein which functions as a molecular chaperone probably maintaining denatured proteins in a folding-competent state. Seems to have versatile functions in various biological processes. Plays a role in regulating muscle function such as smooth muscle vasorelaxation and cardiac myocyte contractility. May regulate myocardial angiogenesis implicating KDR. Overexpression mediates cardioprotection and angiogenesis after induced damage. Stabilizes monomeric YWHAZ thereby supporting YWHAZ chaperone-like activity. In Mus musculus (Mouse), this protein is Heat shock protein beta-6 (Hspb6).